Reading from the N-terminus, the 115-residue chain is Large ribosomal subunit protein uL22c (115 aa).

It belongs to the universal ribosomal protein uL22 family. Part of the 50S ribosomal subunit.

It localises to the plastid. The protein localises to the chloroplast. Functionally, this protein binds specifically to 23S rRNA. The globular domain of the protein is located near the polypeptide exit tunnel on the outside of the subunit, while an extended beta-hairpin is found that lines the wall of the exit tunnel in the center of the 70S ribosome. The polypeptide is Large ribosomal subunit protein uL22c (rpl22) (Thalassiosira pseudonana (Marine diatom)).